We begin with the raw amino-acid sequence, 131 residues long: Torsin-1A-interacting protein 2, isoform IFRG15 (131 aa).

This Mus musculus (Mouse) protein is Torsin-1A-interacting protein 2, isoform IFRG15 (Tor1aip2).